A 342-amino-acid chain; its full sequence is Phomopsin biosynthesis cluster protein B (342 aa).

The interval 1–22 (MESIAKAKSLPNKGRTYDSQRP) is disordered. Residues 87 to 107 (VLIIGCAVISLFAIIGALGFA) form a helical membrane-spanning segment. Residues 118-186 (CASPAHQNPH…QCGESPDEAQ (69 aa)) form a disordered region. A compositionally biased stretch (low complexity) spans 144–155 (HSGSHSSSSSTN). Residue N248 is glycosylated (N-linked (GlcNAc...) asparagine).

It is found in the membrane. Functionally, part of the gene cluster that mediates the biosynthesis of the phomopsins, a group of hexapeptide mycotoxins which infects lupins and causes lupinosis disease in livestock. The role of phomB within the phomopsins biosynthesis pathway has still to be determined. The pathway starts with the processing of the precursor phomA by several endopeptidases including kexin proteases as well as the cluster-specific S41 family peptidase phomP1 and the oligopeptidase phomG to produce 10 identical copies of the hexapeptide Tyr-Val-Ile-Pro-Ile-Asp. After being excised from the precursor peptide, the core peptides are cyclized and modified post-translationally by enzymes encoded within the gene cluster. The timing and order of proteolysis of the phomA precursor and PTMs are still unknown. Two tyrosinase-like enzymes, phomQ1 and phomQ2, catalyze the chlorination and hydroxylation of Tyr, respectively. PhomYb, is proposed to be involved in the construction of the macrocyclic structure. The other 4 ustYa family proteins may be involved in PTMs that generate the unique structure of phomopsin A. PhomYa is required for the hydroxylation of C-beta of Tyr. PhomYc, phomYd, and phomYe are responsible for the biosynthesis of 2,3-dehydroisoleucine (dIle), 2,3-dehydroaspartic acid (dAsp), and 3,4-dehydroproline (dPro), respectively. While dIle formation by phomYc is indispensable for the installation of dAsp by phomYd, the order of the other PTMs have not been elucidated yet. Most of the biosynthetic enzymes likely have broad substrate specificity, and thus, there might be a metabolic grid from a precursor to phomopsin A. The enzyme(s) responsible for the biosynthesis of 3,4-dehydrovaline (dVal) have also not been identified yet. Finally, phomM acts as an S-adenosylmethionine-dependent alpha-N-methyltransferase that catalyzes two successive N-methylation reactions, converting N-desmethyl-phomopsin A to phomopsin A and phomopsin A further to an N,N-dimethylated congener called phomopsin E. This is Phomopsin biosynthesis cluster protein B from Diaporthe leptostromiformis (Lupinosis disease fungus).